Reading from the N-terminus, the 668-residue chain is Endoplasmic reticulum membrane-associated RNA degradation protein (668 aa).

Helical transmembrane passes span 378-398 (LLAF…LSVF) and 575-595 (VLSL…AVCG).

Its subcellular location is the endoplasmic reticulum membrane. Its function is as follows. May play a role in neuronal migration during embryonic development. The polypeptide is Endoplasmic reticulum membrane-associated RNA degradation protein (ERMARD) (Macaca fascicularis (Crab-eating macaque)).